Consider the following 986-residue polypeptide: MAVRRLGAALLLLPLLAAVEETLMDSTTATAELGWMVHPPSGWEEVSGYDENMNTIRTYQVCNVFESSQNNWLRTKFIRRRGAHRIHVEMKFSVRDCSSIPSVPGSCKETFNLYYYEADFDLATKTFPNWMENPWVKVDTIAADESFSQVDLGGRVMKINTEVRSFGPVSRNGFYLAFQDYGGCMSLIAVRVFYRKCPRIIQNGAIFQETLSGAESTSLVAARGSCIANAEEVDVPIKLYCNGDGEWLVPIGRCMCKAGFEAVENGTVCRGCPSGTFKANQGDEACTHCPINSRTTSEGATNCVCRNGYYRADLDPLDMPCTTIPSAPQAVISSVNETSLMLEWTPPRDSGGREDLVYNIICKSCGSGRGACTRCGDNVQYAPRQLGLTEPRIYISDLLAHTQYTFEIQAVNGVTDQSPFSPQFASVNITTNQAAPSAVSIMHQVSRTVDSITLSWSQPDQPNGVILDYELQYYEKELSEYNATAIKSPTNTVTVQGLKAGAIYVFQVRARTVAGYGRYSGKMYFQTMTEAEYQTSIKEKLPLIVGSSAAGLVFLIAVVVIAIVCNRRGFERADSEYTDKLQHYTSGHMTPGMKIYIDPFTYEDPNEAVREFAKEIDISCVKIEQVIGAGEFGEVCSGHLKLPGKREIFVAIKTLKSGYTEKQRRDFLSEASIMGQFDHPNVIHLEGVVTKSTPVMIITEFMENGSLDSFLRQNDGQFTVIQLVGMLRGIAAGMKYLADMNYVHRDLAARNILVNSNLVCKVSDFGLSRFLEDDTSDPTYTSALGGKIPIRWTAPEAIQYRKFTSASDVWSYGIVMWEVMSYGERPYWDMTNQDVINAIEQDYRLPPPMDCPSALHQLMLDCWQKDRNHRPKFGQIVNTLDKMIRNPNSLKAMAPLSSGINLPLLDRTIPDYTSFNTVDEWLEAIKMGQYKESFANAGFTSFDVVSQMMMEDILRVGVTLAGHQKKILNSIQVMRAQMNQIQSVEV.

The first 18 residues, 1–18 (MAVRRLGAALLLLPLLAA), serve as a signal peptide directing secretion. Residues 19–543 (VEETLMDSTT…QTSIKEKLPL (525 aa)) are Extracellular-facing. In terms of domain architecture, Eph LBD spans 20–202 (EETLMDSTTA…FYRKCPRIIQ (183 aa)). 2 cysteine pairs are disulfide-bonded: cysteine 62–cysteine 184 and cysteine 97–cysteine 107. N-linked (GlcNAc...) asparagine glycosylation is found at asparagine 265, asparagine 336, asparagine 428, and asparagine 482. Fibronectin type-III domains are found at residues 324-434 (IPSA…TNQA) and 435-530 (APSA…TMTE). The helical transmembrane segment at 544-564 (IVGSSAAGLVFLIAVVVIAIV) threads the bilayer. Residues 565–986 (CNRRGFERAD…QMNQIQSVEV (422 aa)) are Cytoplasmic-facing. A Protein kinase domain is found at 621–884 (VKIEQVIGAG…QIVNTLDKMI (264 aa)). ATP is bound by residues 627 to 635 (IGAGEFGEV) and lysine 653. The active-site Proton acceptor is the aspartate 746. Lysine 891 participates in a covalent cross-link: Glycyl lysine isopeptide (Lys-Gly) (interchain with G-Cter in ubiquitin). One can recognise an SAM domain in the interval 913-977 (TSFNTVDEWL…LNSIQVMRAQ (65 aa)). The short motif at 984-986 (VEV) is the PDZ-binding element.

It belongs to the protein kinase superfamily. Tyr protein kinase family. Ephrin receptor subfamily. As to quaternary structure, heterotetramer upon binding of the ligand. The heterotetramer is composed of an ephrin dimer and a receptor dimer. Interacts (via PDZ-binding motif) with GRIP1 and PICK1 (via PDZ domain). Interacts with ARHGEF15; mediates ARHGEF15 phosphorylation, ubiquitination and degradation by the proteasome. Interacts with AQP1; involved in endolymph production in the inner ear. Interacts with EFNA5. Interacts with SPSB1. Interacts with SPSB4. Interacts with SH2D3C. Post-translationally, autophosphorylated; ligand binding stimulates autophosphorylation on tyrosine residues. In terms of processing, ligand binding induces cleavage by matrix metalloproteinases (MMPs) such as MMP7/MMP9, producing an EphB2/N-terminal fragment (NTF) and a C-terminal long fragment (EphB2-LF). EphB2-LF is further cleaved by MMPs, producing EphB2/CTF1 which is further cleaved by the PS1/gamma-secretase producing EphB2/CTF2. Polyubiquitinated; ligand binding stimulates ubiquitination. Ubiquitinated by RNF186 at Lys-891, mainly through 'Lys-27'-linked polyubiquitin chains. Ubiquitinated by CRL2(KLHDC2) E3 ligase complex. Expressed in the epithelial dark cells of the inner ear. Expressed in the region of the proximal tubules of the kidney nephron. Expressed in myogenic progenitor cells.

Its subcellular location is the cell membrane. The protein resides in the cell projection. It localises to the axon. The protein localises to the dendrite. The catalysed reaction is L-tyrosyl-[protein] + ATP = O-phospho-L-tyrosyl-[protein] + ADP + H(+). Receptor tyrosine kinase which binds promiscuously transmembrane ephrin-B family ligands residing on adjacent cells, leading to contact-dependent bidirectional signaling into neighboring cells. The signaling pathway downstream of the receptor is referred to as forward signaling while the signaling pathway downstream of the ephrin ligand is referred to as reverse signaling. Functions in axon guidance during development. Involved in the guidance of commissural axons, that form a major interhemispheric connection between the 2 temporal lobes of the cerebral cortex. Also involved in guidance of contralateral inner ear efferent growth cones at the midline and of retinal ganglion cell axons to the optic disk. In addition to axon guidance, also regulates dendritic spines development and maturation and stimulates the formation of excitatory synapses. Upon activation by EFNB1, abolishes the ARHGEF15-mediated negative regulation on excitatory synapse formation. Controls other aspects of development including angiogenesis, palate development and in inner ear development through regulation of endolymph production. Forward and reverse signaling through the EFNB2/EPHB2 complex regulate movement and adhesion of cells that tubularize the urethra and septate the cloaca. May function as a tumor suppressor. May be involved in the regulation of platelet activation and blood coagulation. This Mus musculus (Mouse) protein is Ephrin type-B receptor 2.